A 315-amino-acid polypeptide reads, in one-letter code: Acetyl-coenzyme A carboxylase carboxyl transferase subunit alpha (315 aa).

Residues 40 to 293 form the CoA carboxyltransferase C-terminal domain; the sequence is LQDKSKTLTE…REELSSQLAM (254 aa).

This sequence belongs to the AccA family. In terms of assembly, acetyl-CoA carboxylase is a heterohexamer composed of biotin carboxyl carrier protein (AccB), biotin carboxylase (AccC) and two subunits each of ACCase subunit alpha (AccA) and ACCase subunit beta (AccD).

It localises to the cytoplasm. The enzyme catalyses N(6)-carboxybiotinyl-L-lysyl-[protein] + acetyl-CoA = N(6)-biotinyl-L-lysyl-[protein] + malonyl-CoA. The protein operates within lipid metabolism; malonyl-CoA biosynthesis; malonyl-CoA from acetyl-CoA: step 1/1. Component of the acetyl coenzyme A carboxylase (ACC) complex. First, biotin carboxylase catalyzes the carboxylation of biotin on its carrier protein (BCCP) and then the CO(2) group is transferred by the carboxyltransferase to acetyl-CoA to form malonyl-CoA. In Pseudomonas savastanoi pv. phaseolicola (strain 1448A / Race 6) (Pseudomonas syringae pv. phaseolicola (strain 1448A / Race 6)), this protein is Acetyl-coenzyme A carboxylase carboxyl transferase subunit alpha.